Consider the following 199-residue polypeptide: Large ribosomal subunit protein eL13B (199 aa).

Thr144 and Thr152 each carry phosphothreonine.

This sequence belongs to the eukaryotic ribosomal protein eL13 family. As to quaternary structure, component of the large ribosomal subunit (LSU). Mature yeast ribosomes consist of a small (40S) and a large (60S) subunit. The 40S small subunit contains 1 molecule of ribosomal RNA (18S rRNA) and 33 different proteins (encoded by 57 genes). The large 60S subunit contains 3 rRNA molecules (25S, 5.8S and 5S rRNA) and 46 different proteins (encoded by 81 genes).

It is found in the cytoplasm. Component of the ribosome, a large ribonucleoprotein complex responsible for the synthesis of proteins in the cell. The small ribosomal subunit (SSU) binds messenger RNAs (mRNAs) and translates the encoded message by selecting cognate aminoacyl-transfer RNA (tRNA) molecules. The large subunit (LSU) contains the ribosomal catalytic site termed the peptidyl transferase center (PTC), which catalyzes the formation of peptide bonds, thereby polymerizing the amino acids delivered by tRNAs into a polypeptide chain. The nascent polypeptides leave the ribosome through a tunnel in the LSU and interact with protein factors that function in enzymatic processing, targeting, and the membrane insertion of nascent chains at the exit of the ribosomal tunnel. This Saccharomyces cerevisiae (strain ATCC 204508 / S288c) (Baker's yeast) protein is Large ribosomal subunit protein eL13B.